We begin with the raw amino-acid sequence, 230 residues long: Cytidylate kinase (230 aa).

ATP is bound at residue 12–20; the sequence is GPSGAGKGT.

The protein belongs to the cytidylate kinase family. Type 1 subfamily.

Its subcellular location is the cytoplasm. The enzyme catalyses CMP + ATP = CDP + ADP. The catalysed reaction is dCMP + ATP = dCDP + ADP. The chain is Cytidylate kinase from Shewanella putrefaciens (strain CN-32 / ATCC BAA-453).